The sequence spans 540 residues: Glucose-6-phosphate isomerase (540 aa).

Glutamate 351 functions as the Proton donor in the catalytic mechanism. Catalysis depends on residues histidine 382 and lysine 506.

The protein belongs to the GPI family.

Its subcellular location is the cytoplasm. It carries out the reaction alpha-D-glucose 6-phosphate = beta-D-fructose 6-phosphate. It functions in the pathway carbohydrate biosynthesis; gluconeogenesis. The protein operates within carbohydrate degradation; glycolysis; D-glyceraldehyde 3-phosphate and glycerone phosphate from D-glucose: step 2/4. Catalyzes the reversible isomerization of glucose-6-phosphate to fructose-6-phosphate. In Corynebacterium glutamicum (strain ATCC 13032 / DSM 20300 / JCM 1318 / BCRC 11384 / CCUG 27702 / LMG 3730 / NBRC 12168 / NCIMB 10025 / NRRL B-2784 / 534), this protein is Glucose-6-phosphate isomerase.